Consider the following 263-residue polypeptide: Phosphatidylglycerol--prolipoprotein diacylglyceryl transferase (263 aa).

A run of 4 helical transmembrane segments spans residues Val-6–Ile-26, Leu-50–Tyr-70, Thr-85–Ile-105, and Ile-112–Gly-132. Arg-133 contributes to the a 1,2-diacyl-sn-glycero-3-phospho-(1'-sn-glycerol) binding site. Transmembrane regions (helical) follow at residues Leu-169 to Leu-189, Gly-197 to Phe-217, and Met-233 to Leu-253.

This sequence belongs to the Lgt family.

Its subcellular location is the cell membrane. The catalysed reaction is L-cysteinyl-[prolipoprotein] + a 1,2-diacyl-sn-glycero-3-phospho-(1'-sn-glycerol) = an S-1,2-diacyl-sn-glyceryl-L-cysteinyl-[prolipoprotein] + sn-glycerol 1-phosphate + H(+). The protein operates within protein modification; lipoprotein biosynthesis (diacylglyceryl transfer). Functionally, catalyzes the transfer of the diacylglyceryl group from phosphatidylglycerol to the sulfhydryl group of the N-terminal cysteine of a prolipoprotein, the first step in the formation of mature lipoproteins. The protein is Phosphatidylglycerol--prolipoprotein diacylglyceryl transferase of Wolbachia pipientis subsp. Culex pipiens (strain wPip).